Consider the following 220-residue polypeptide: Cell division protein SepF (220 aa).

The tract at residues 33–82 is disordered; sequence GAARGYARRPREDRFEEEGYIDRAGREYDDRPAPREYDEPPIYRGGYDEP. Residues 52-70 are compositionally biased toward basic and acidic residues; that stretch reads YIDRAGREYDDRPAPREYD.

This sequence belongs to the SepF family. Homodimer. Interacts with FtsZ.

The protein resides in the cytoplasm. In terms of biological role, cell division protein that is part of the divisome complex and is recruited early to the Z-ring. Probably stimulates Z-ring formation, perhaps through the cross-linking of FtsZ protofilaments. Its function overlaps with FtsA. The sequence is that of Cell division protein SepF from Mycobacterium sp. (strain JLS).